The chain runs to 369 residues: Nuclear pore complex-interacting protein family member A7 (369 aa).

The segment at 151 to 171 (SMKEREHREEERQVSEAEENG) is disordered.

Belongs to the NPIP family.

The chain is Nuclear pore complex-interacting protein family member A7 (NPIPA7) from Homo sapiens (Human).